The sequence spans 500 residues: L-arabinose isomerase (500 aa).

Residues Glu-306, Glu-333, His-350, and His-450 each contribute to the Mn(2+) site.

Belongs to the arabinose isomerase family. Homohexamer. Mn(2+) serves as cofactor.

The catalysed reaction is beta-L-arabinopyranose = L-ribulose. It participates in carbohydrate degradation; L-arabinose degradation via L-ribulose; D-xylulose 5-phosphate from L-arabinose (bacterial route): step 1/3. Catalyzes the conversion of L-arabinose to L-ribulose. This Shigella dysenteriae serotype 1 (strain Sd197) protein is L-arabinose isomerase.